A 448-amino-acid chain; its full sequence is Exodeoxyribonuclease 7 large subunit (448 aa).

Belongs to the XseA family. Heterooligomer composed of large and small subunits.

It localises to the cytoplasm. It carries out the reaction Exonucleolytic cleavage in either 5'- to 3'- or 3'- to 5'-direction to yield nucleoside 5'-phosphates.. Functionally, bidirectionally degrades single-stranded DNA into large acid-insoluble oligonucleotides, which are then degraded further into small acid-soluble oligonucleotides. The chain is Exodeoxyribonuclease 7 large subunit from Exiguobacterium sp. (strain ATCC BAA-1283 / AT1b).